A 644-amino-acid polypeptide reads, in one-letter code: 3D-(3,5/4)-trihydroxycyclohexane-1,2-dione hydrolase (644 aa).

E65 is a binding site for thiamine diphosphate. The segment at 442 to 522 (SLPGDLQRMW…INVLLFDNSG (81 aa)) is thiamine pyrophosphate binding. Mg(2+) contacts are provided by D493 and N520.

This sequence belongs to the TPP enzyme family. Mg(2+) is required as a cofactor. The cofactor is thiamine diphosphate.

It catalyses the reaction 3D-3,5/4-trihydroxycyclohexane-1,2-dione + H2O = 5-deoxy-D-glucuronate + H(+). It functions in the pathway polyol metabolism; myo-inositol degradation into acetyl-CoA; acetyl-CoA from myo-inositol: step 3/7. In terms of biological role, involved in the cleavage of the C1-C2 bond of 3D-(3,5/4)-trihydroxycyclohexane-1,2-dione (THcHDO) to yield 5-deoxy-glucuronate (5DG). In Bacillus thuringiensis (strain Al Hakam), this protein is 3D-(3,5/4)-trihydroxycyclohexane-1,2-dione hydrolase.